The sequence spans 99 residues: Large ribosomal subunit protein uL23 (99 aa).

It belongs to the universal ribosomal protein uL23 family. In terms of assembly, part of the 50S ribosomal subunit. Contacts protein L29, and trigger factor when it is bound to the ribosome.

Its function is as follows. One of the early assembly proteins it binds 23S rRNA. One of the proteins that surrounds the polypeptide exit tunnel on the outside of the ribosome. Forms the main docking site for trigger factor binding to the ribosome. This is Large ribosomal subunit protein uL23 from Oenococcus oeni (strain ATCC BAA-331 / PSU-1).